The sequence spans 70 residues: DNA-directed RNA polymerase subunit omega (70 aa).

It belongs to the RNA polymerase subunit omega family. The RNAP catalytic core consists of 2 alpha, 1 beta, 1 beta' and 1 omega subunit. When a sigma factor is associated with the core the holoenzyme is formed, which can initiate transcription.

The catalysed reaction is RNA(n) + a ribonucleoside 5'-triphosphate = RNA(n+1) + diphosphate. Its function is as follows. Promotes RNA polymerase assembly. Latches the N- and C-terminal regions of the beta' subunit thereby facilitating its interaction with the beta and alpha subunits. This is DNA-directed RNA polymerase subunit omega from Bacillus cereus (strain G9842).